Reading from the N-terminus, the 86-residue chain is NADH-ubiquinone oxidoreductase chain 4L (86 aa).

The next 2 membrane-spanning stretches (helical) occupy residues 22-42 and 52-72; these read LLVT…LLVY and FIFL…LVSL.

The protein belongs to the complex I subunit 4L family.

The protein localises to the mitochondrion membrane. The enzyme catalyses a ubiquinone + NADH + 5 H(+)(in) = a ubiquinol + NAD(+) + 4 H(+)(out). Core subunit of the mitochondrial membrane respiratory chain NADH dehydrogenase (Complex I) that is believed to belong to the minimal assembly required for catalysis. Complex I functions in the transfer of electrons from NADH to the respiratory chain. The immediate electron acceptor for the enzyme is believed to be ubiquinone. The sequence is that of NADH-ubiquinone oxidoreductase chain 4L (ND4L) from Artemia salina (Brine shrimp).